The chain runs to 473 residues: MNKCYLKYLLQSWTPRYSIRSNTRNFLQEILSFNEPQNLTESNWKRWLQCFNRYNLPLQMWYKISPQQWKSQVSKHWKDRNHFSKNSHRKNQSLLLYKQKEFYSIFASDSSSRYTREIERLNKRYRCNLFLYSYLDHTKSLNMRRFPVWRSEERETILNNRIKEIRNFHLFNNERNNENSINSLGKEKNLFFRSNLVLWLVPEFLGKKNIHKTEFIPVFYPSLVRERGEKTIQNRKSLRERERHESIRQWRWESKDLEERFKELGDMASVMTFIQNKKNIISLSVKMREDLDLFRLLFRRDIGLNRLTINSEHRLPRVLDDEILMCKIITTLLKFKSRFQERLDFNIFDESISRIRKFESERKTISKSFSLEEILLPKRCKELRILNSLYSKYDINEEAKFDEGSLGKNRGSNEKLVRINEEFNTNVNQSIKRFLWPSYRLEDLACMNRFWFNTSNGSRFSMLRIRLYLLIHD.

Belongs to the TIC214 family. In terms of assembly, part of the Tic complex.

It is found in the plastid. Its subcellular location is the chloroplast. Involved in protein precursor import into chloroplasts. May be part of an intermediate translocation complex acting as a protein-conducting channel at the inner envelope. The polypeptide is Putative protein TIC 214 C-terminal part (Anthoceros angustus (Hornwort)).